The chain runs to 274 residues: Rhamnulose-1-phosphate aldolase (274 aa).

The active site involves Glu-117. The Zn(2+) site is built by His-141, His-143, and His-212.

Belongs to the aldolase class II family. RhaD subfamily. In terms of assembly, homotetramer. Zn(2+) serves as cofactor.

The protein localises to the cytoplasm. The enzyme catalyses L-rhamnulose 1-phosphate = (S)-lactaldehyde + dihydroxyacetone phosphate. Its pathway is carbohydrate degradation; L-rhamnose degradation; glycerone phosphate from L-rhamnose: step 3/3. Functionally, catalyzes the reversible cleavage of L-rhamnulose-1-phosphate to dihydroxyacetone phosphate (DHAP) and L-lactaldehyde. The polypeptide is Rhamnulose-1-phosphate aldolase (Escherichia fergusonii (strain ATCC 35469 / DSM 13698 / CCUG 18766 / IAM 14443 / JCM 21226 / LMG 7866 / NBRC 102419 / NCTC 12128 / CDC 0568-73)).